The sequence spans 208 residues: 3,4-dihydroxy-2-butanone 4-phosphate synthase (208 aa).

T3 carries the phosphothreonine modification. E27 contacts Mg(2+). D31 is a D-ribulose 5-phosphate binding site. S-glutathionyl cysteine; by GRX2 is present on C56. Residues T88 and 145–149 (RRGHT) contribute to the D-ribulose 5-phosphate site. H148 is a binding site for Mg(2+).

It belongs to the DHBP synthase family. As to quaternary structure, homodimer. Mg(2+) is required as a cofactor. The cofactor is Mn(2+). Post-translationally, S-glutathionylation of Cys-56 is reversible and dependent on the cytoplasmic isoform of glutaredoxin-2.

It localises to the cytoplasm. The protein localises to the nucleus. Its subcellular location is the mitochondrion intermembrane space. It carries out the reaction D-ribulose 5-phosphate = (2S)-2-hydroxy-3-oxobutyl phosphate + formate + H(+). The protein operates within cofactor biosynthesis; riboflavin biosynthesis; 2-hydroxy-3-oxobutyl phosphate from D-ribulose 5-phosphate: step 1/1. Catalyzes the conversion of D-ribulose 5-phosphate to formate and 3,4-dihydroxy-2-butanone 4-phosphate. Also has an unrelated function in expression of mitochondrial respiration. This chain is 3,4-dihydroxy-2-butanone 4-phosphate synthase (RIB3), found in Saccharomyces cerevisiae (strain ATCC 204508 / S288c) (Baker's yeast).